The primary structure comprises 500 residues: MSSSPSFGLLAVAALLLALSLAQHGSLAATVGPRVIVVGAGMSGISAAKRLSEAGITDLLILEATDHIGGRMHKTNFAGINVELGANWVEGVNGGKMNPIWPIVNSTLKLRNFRSDFDYLAQNVYKEDGGVYDEDYVQKRIELADSVEEMGEKLSATLHASGRDDMSILAMQRLNEHQPNGPATPVDMVVDYYKFDYEFAEPPRVTSLQNTVPLATFSDFGDDVYFVADQRGYEAVVYYLAGQYLKTDDKSGKIVDPRLQLNKVVREIKYSPGGVTVKTEDNSVYSADYVMVSASLGVLQSDLIQFKPKLPTWKVRAIYQFDMAVYTKIFLKFPRKFWPEGKGREFFLYASSRRGYYGVWQEFEKQYPDANVLLVTVTDEESRRIEQQSDEQTKAEIMQVLRKMFPGKDVPDATDILVPRWWSDRFYKGTFSNWPVGVNRYEYDQLRAPVGRVYFTGEHTSEHYNGYVHGAYLSGIDSAEILINCAQKKMCKYHVQGKYD.

An N-terminal signal peptide occupies residues 1–28 (MSSSPSFGLLAVAALLLALSLAQHGSLA). Residues 42–43 (MS), Glu-63, Arg-71, and 87–88 (NW) contribute to the FAD site. Glu-90 is a binding site for substrate. The N-linked (GlcNAc...) asparagine glycan is linked to Asn-105. Glu-198 is a substrate binding site. 3 residues coordinate FAD: Val-265, Tyr-427, and Glu-458. Gly-466 contacts substrate. Residue 467-468 (YV) coordinates FAD. Residues Cys-485 and Cys-491 are joined by a disulfide bond.

Belongs to the flavin monoamine oxidase family. In terms of assembly, monomer. Requires FAD as cofactor.

Its subcellular location is the secreted. It localises to the extracellular space. The protein localises to the apoplast. The protein resides in the cell wall. It carries out the reaction spermidine + O2 + H2O = 4-aminobutanal + propane-1,3-diamine + H2O2. The catalysed reaction is N(8)-acetylspermidine + O2 + H2O = 4-acetamidobutanal + propane-1,3-diamine + H2O2. It catalyses the reaction spermine + O2 + H2O = N-(3-aminopropyl)-4-aminobutanal + propane-1,3-diamine + H2O2. The enzyme catalyses N(1)-acetylspermine + O2 + H2O = N-(3-acetamidopropyl)-4-aminobutanal + propane-1,3-diamine + H2O2. It participates in amine and polyamine degradation; spermine degradation. Its function is as follows. Flavoenzyme involved in polyamine back-conversion. Catalyzes the oxidation of the secondary amino group of polyamines, such as spermine, spermidine and their acetyl derivatives. Plays an important role in the regulation of polyamine intracellular concentration. This chain is Polyamine oxidase 1, found in Zea mays (Maize).